Here is a 20-residue protein sequence, read N- to C-terminus: Citrate synthase (20 aa).

The protein belongs to the citrate synthase family. Homohexamer.

It carries out the reaction oxaloacetate + acetyl-CoA + H2O = citrate + CoA + H(+). It functions in the pathway carbohydrate metabolism; tricarboxylic acid cycle; isocitrate from oxaloacetate: step 1/2. Allosterically inhibited by NADH. The sequence is that of Citrate synthase (gltA) from Streptomyces hygroscopicus.